Reading from the N-terminus, the 198-residue chain is Ribonuclease HII (198 aa).

The 191-residue stretch at 5-195 folds into the RNase H type-2 domain; that stretch reads LRVAGVDEAG…VKAWLASHQG (191 aa). 3 residues coordinate a divalent metal cation: D11, E12, and D103.

This sequence belongs to the RNase HII family. Mn(2+) is required as a cofactor. The cofactor is Mg(2+).

The protein localises to the cytoplasm. The enzyme catalyses Endonucleolytic cleavage to 5'-phosphomonoester.. Endonuclease that specifically degrades the RNA of RNA-DNA hybrids. This chain is Ribonuclease HII, found in Chromobacterium violaceum (strain ATCC 12472 / DSM 30191 / JCM 1249 / CCUG 213 / NBRC 12614 / NCIMB 9131 / NCTC 9757 / MK).